The following is a 253-amino-acid chain: 5-oxoprolinase subunit A (253 aa).

This sequence belongs to the LamB/PxpA family. In terms of assembly, forms a complex composed of PxpA, PxpB and PxpC.

It catalyses the reaction 5-oxo-L-proline + ATP + 2 H2O = L-glutamate + ADP + phosphate + H(+). Catalyzes the cleavage of 5-oxoproline to form L-glutamate coupled to the hydrolysis of ATP to ADP and inorganic phosphate. This is 5-oxoprolinase subunit A from Syntrophobacter fumaroxidans (strain DSM 10017 / MPOB).